The sequence spans 449 residues: Early 53 kDa protein (449 aa).

The segment at 1 to 68 is disordered; it reads MNRFFRENNI…CTSPAKPLEH (68 aa). The segment covering 31–42 has biased composition (pro residues); that stretch reads NSPPSPVRPPPK. The segment at 379–399 adopts a C4-type zinc-finger fold; sequence CKLCKKTKLYYKNPVLYCTKC.

Its subcellular location is the virion. The protein resides in the host cytoplasm. It localises to the host nucleus. It is found in the host cell membrane. In terms of biological role, may act as a packaging protein or as a structural component associated with intranuclear baculovirus virion assembly. The sequence is that of Early 53 kDa protein (ME53) from Autographa californica nuclear polyhedrosis virus (AcMNPV).